Here is a 307-residue protein sequence, read N- to C-terminus: Ras-related protein RabR (307 aa).

A compositionally biased stretch (polar residues) spans 1-10 (MTTTTLLSES). Residues 1 to 45 (MTTTTLLSESTNNSNNTNNNTNNNTNNTMNNNNNNNNNNTIGNNN) form a disordered region. The span at 11 to 45 (TNNSNNTNNNTNNNTNNTMNNNNNNNNNNTIGNNN) shows a compositional bias: low complexity. A GTP-binding site is contributed by 61–68 (GDEEVGKG). The Effector region motif lies at 83–92 (ENLYNIEVDR). Position 122-126 (122-126 (NFHMH)) interacts with GTP. A compositionally biased stretch (low complexity) spans 175 to 185 (NFNCQSNSRNS). The segment at 175–223 (NFNCQSNSRNSTNYNRHSVGNHCPNSPQKGEKENNTHSSTAPPAPPPLP) is disordered. The segment covering 186-202 (TNYNRHSVGNHCPNSPQ) has biased composition (polar residues). A GTP-binding site is contributed by 230–233 (NKCD). A Cysteine methyl ester modification is found at Cys-304. The S-geranylgeranyl cysteine moiety is linked to residue Cys-304. The propeptide at 305 to 307 (NLM) is removed in mature form.

Belongs to the small GTPase superfamily. Rab family.

The protein localises to the cell membrane. The protein is Ras-related protein RabR (rabR) of Dictyostelium discoideum (Social amoeba).